The chain runs to 271 residues: Protein PXR1 (271 aa).

Residues 25 to 72 (TSRFGHQFLEKFGWKPGMGLGLSPMNSNTSHIKVSIKDDNVGLGAKLK) enclose the G-patch domain. The disordered stretch occupies residues 147-239 (SNAKKRKREG…SASNIPDAVN (93 aa)). The segment covering 157–168 (DDSEDEDDDDKE) has biased composition (acidic residues). Positions 175–203 (KKHKKHKKHKKDKKKDKKDKKEHKKHKKE) are enriched in basic residues. Residues 204 to 221 (EKRLKKEKRAEKTKETKK) show a composition bias toward basic and acidic residues. Residue Ser-230 is modified to Phosphoserine.

It belongs to the PINX1 family. Interacts with EST2.

Its subcellular location is the nucleus. The protein resides in the nucleolus. Functionally, involved in rRNA-processing at A0, A1 and A2 sites through its action in U18 and U24 snoRNA 3'-end final trimming. Negative regulator of telomerase through competition for binding to EST2 with TLC1. In Saccharomyces cerevisiae (strain ATCC 204508 / S288c) (Baker's yeast), this protein is Protein PXR1 (PXR1).